The primary structure comprises 209 residues: 3-dehydroquinate dehydratase (209 aa).

3-dehydroquinate contacts are provided by residues Ser-6, 25-27 (ELR), and Arg-55. His-109 functions as the Proton donor/acceptor in the catalytic mechanism. Lys-134 (schiff-base intermediate with substrate) is an active-site residue. 3-dehydroquinate contacts are provided by Arg-172 and Gln-195.

This sequence belongs to the type-I 3-dehydroquinase family. Homodimer.

It carries out the reaction 3-dehydroquinate = 3-dehydroshikimate + H2O. It functions in the pathway metabolic intermediate biosynthesis; chorismate biosynthesis; chorismate from D-erythrose 4-phosphate and phosphoenolpyruvate: step 3/7. In terms of biological role, involved in the third step of the chorismate pathway, which leads to the biosynthesis of aromatic amino acids. Catalyzes the cis-dehydration of 3-dehydroquinate (DHQ) and introduces the first double bond of the aromatic ring to yield 3-dehydroshikimate. This Methanoregula boonei (strain DSM 21154 / JCM 14090 / 6A8) protein is 3-dehydroquinate dehydratase.